The chain runs to 188 residues: Epididymal-specific lipocalin-5 (188 aa).

An N-terminal signal peptide occupies residues 1-19 (MENIMPFALLGLCVGLAAG). Cys-82 and Cys-176 are oxidised to a cystine.

The protein belongs to the calycin superfamily. Lipocalin family. There are two similar, immunologically cross-reacting forms of this protein, designated B and C, which probably result from different processing of the amino end. Post-translationally, the N-terminus of form C is probably blocked. Synthesized exclusively in the proximal part (caput epididymidis) of the epididymis. It makes up a substantial part of the total protein in the epididymal luminal fluid and binds to the sperm membrane.

The protein resides in the secreted. In terms of biological role, associates with spermatozoa in the epididymal fluid but does not bind tightly to them. Binds both all-trans and 9-cis retinoic acid. May act as a retinoid carrier protein which is required for epididymal function and/or sperm maturation. This is Epididymal-specific lipocalin-5 (Lcn5) from Rattus norvegicus (Rat).